Consider the following 395-residue polypeptide: DNA primase small subunit PriS (395 aa).

Active-site residues include Asp95, Asp97, and Asp302.

Belongs to the eukaryotic-type primase small subunit family. Heterodimer of a small subunit (PriS) and a large subunit (PriL). Mg(2+) serves as cofactor. Requires Mn(2+) as cofactor.

In terms of biological role, catalytic subunit of DNA primase, an RNA polymerase that catalyzes the synthesis of short RNA molecules used as primers for DNA polymerase during DNA replication. The small subunit contains the primase catalytic core and has DNA synthesis activity on its own. Binding to the large subunit stabilizes and modulates the activity, increasing the rate of DNA synthesis while decreasing the length of the DNA fragments, and conferring RNA synthesis capability. The DNA polymerase activity may enable DNA primase to also catalyze primer extension after primer synthesis. May also play a role in DNA repair. This Methanothrix thermoacetophila (strain DSM 6194 / JCM 14653 / NBRC 101360 / PT) (Methanosaeta thermophila) protein is DNA primase small subunit PriS.